Consider the following 662-residue polypeptide: Chaperone protein dnaK1 (662 aa).

T198 carries the phosphothreonine; by autocatalysis modification. The interval 630-662 (DWDDDPWAAPSGPPRGRSLNRRDRDPWDDDFYR) is disordered. A compositionally biased stretch (basic and acidic residues) spans 649 to 662 (NRRDRDPWDDDFYR).

It belongs to the heat shock protein 70 family.

In terms of biological role, acts as a chaperone. In Parasynechococcus marenigrum (strain WH8102), this protein is Chaperone protein dnaK1 (dnaK1).